Consider the following 77-residue polypeptide: Putative antitoxin VapB3 (77 aa).

This sequence belongs to the UPF0330 family.

Possibly the antitoxin component of a type II toxin-antitoxin (TA) system. Its cognate toxin is VapC3 (Potential). The chain is Putative antitoxin VapB3 (vapB3) from Methanocaldococcus jannaschii (strain ATCC 43067 / DSM 2661 / JAL-1 / JCM 10045 / NBRC 100440) (Methanococcus jannaschii).